The sequence spans 137 residues: Sec-independent protein translocase protein TatB (137 aa).

The helical transmembrane segment at 2–22 threads the bilayer; that stretch reads FANIGWGEMLILVIAGLVILG. Positions 92–137 are disordered; the sequence is FFTGKFDQQNGKPAAGQEKPVTPVNPPVTATPPSESTATPFDSDAT. Low complexity predominate over residues 122-131; the sequence is TPPSESTATP.

Belongs to the TatB family. In terms of assembly, the Tat system comprises two distinct complexes: a TatABC complex, containing multiple copies of TatA, TatB and TatC subunits, and a separate TatA complex, containing only TatA subunits. Substrates initially bind to the TatABC complex, which probably triggers association of the separate TatA complex to form the active translocon.

The protein localises to the cell membrane. Functionally, part of the twin-arginine translocation (Tat) system that transports large folded proteins containing a characteristic twin-arginine motif in their signal peptide across membranes. Together with TatC, TatB is part of a receptor directly interacting with Tat signal peptides. TatB may form an oligomeric binding site that transiently accommodates folded Tat precursor proteins before their translocation. The protein is Sec-independent protein translocase protein TatB of Mycobacterium sp. (strain JLS).